The sequence spans 475 residues: Pyruvate kinase (475 aa).

R33 provides a ligand contact to substrate. K(+)-binding residues include N35, S37, and D67. An ATP-binding site is contributed by N35–H38. 2 residues coordinate ATP: R74 and K155. Residue E220 coordinates Mg(2+). 3 residues coordinate substrate: G243, D244, and T276. D244 contributes to the Mg(2+) binding site.

Belongs to the pyruvate kinase family. As to quaternary structure, homotetramer. Mg(2+) is required as a cofactor. K(+) serves as cofactor.

The enzyme catalyses pyruvate + ATP = phosphoenolpyruvate + ADP + H(+). The protein operates within carbohydrate degradation; glycolysis; pyruvate from D-glyceraldehyde 3-phosphate: step 5/5. This is Pyruvate kinase (pyk) from Corynebacterium glutamicum (strain ATCC 13032 / DSM 20300 / JCM 1318 / BCRC 11384 / CCUG 27702 / LMG 3730 / NBRC 12168 / NCIMB 10025 / NRRL B-2784 / 534).